A 311-amino-acid polypeptide reads, in one-letter code: MQIYPLRFVPNKIDFDFMNFKKVSYSFSIILSLISLIWISIYKFNFGIDFVGGIVIEVRLDQAPDLPKMRAVLSALEIGEVVLQNFGSERDLSIRFGSSSEENLMKNIDIIKTSLRNNFPYNFEYRKVDFVGPQVGRQLIEAGAMAMLFSFLAIMVYIGVRFEWYFGFGILIALVHDVILALGFMSMTKLDFNLSTIAAVLTIIGYSVNDSVVIYDRIRENLRKYHKKNITEIINLSINETLSRTILTVITTLLANLALILFGGKAIHSFSVLVFFGIIAGTYSSIFISAPILTMFANRKFNKKVITQGKG.

6 helical membrane-spanning segments follow: residues 23-42 (VSYS…ISIY), 140-160 (IEAG…YIGV), 164-184 (WYFG…ALGF), 194-214 (LSTI…SVVI), 246-266 (ILTV…GGKA), and 272-292 (VLVF…SAPI).

Belongs to the SecD/SecF family. SecF subfamily. As to quaternary structure, forms a complex with SecD. Part of the essential Sec protein translocation apparatus which comprises SecA, SecYEG and auxiliary proteins SecDF-YajC and YidC.

Its subcellular location is the cell inner membrane. In terms of biological role, part of the Sec protein translocase complex. Interacts with the SecYEG preprotein conducting channel. SecDF uses the proton motive force (PMF) to complete protein translocation after the ATP-dependent function of SecA. The sequence is that of Protein translocase subunit SecF from Rickettsia prowazekii (strain Madrid E).